An 87-amino-acid polypeptide reads, in one-letter code: MSQAEFEKAAEEVKNLKTKPADDEMLFIYSHYKQATVGDINTERPGILDLKGKAKWDAWNGLKGTSKEDAMKAYINKVEELKKKYGI.

The residue at position 2 (S2) is an N-acetylserine. The region spanning 2 to 87 (SQAEFEKAAE…VEELKKKYGI (86 aa)) is the ACB domain. K8 is modified (N6-acetyllysine; alternate). N6-succinyllysine; alternate is present on K8. K14 serves as a coordination point for an acyl-CoA. Residue K17 is modified to N6-succinyllysine. K19 is subject to N6-acetyllysine. Y29 is subject to Phosphotyrosine. Residues 29–33 (YSHYK), K51, K55, and Y74 each bind an acyl-CoA. At K51 the chain carries N6-acetyllysine. At K55 the chain carries N6-acetyllysine; alternate. Position 55 is an N6-succinyllysine; alternate (K55). Residue K55 is modified to N6-(2-hydroxyisobutyryl)lysine; alternate. K55 is modified (N6-malonyllysine; alternate). N6-acetyllysine; alternate is present on K77. K77 bears the N6-succinyllysine; alternate mark.

The protein belongs to the ACBP family. Monomer.

Its subcellular location is the endoplasmic reticulum. It localises to the golgi apparatus. In terms of biological role, binds medium- and long-chain acyl-CoA esters with very high affinity and may function as an intracellular carrier of acyl-CoA esters. It is also able to displace diazepam from the benzodiazepine (BZD) recognition site located on the GABA type A receptor. It is therefore possible that this protein also acts as a neuropeptide to modulate the action of the GABA receptor. DBI(32-86) has antibacterial properties. In Sus scrofa (Pig), this protein is Acyl-CoA-binding protein (DBI).